The chain runs to 318 residues: Ribosomal RNA small subunit methyltransferase A (318 aa).

Residues asparagine 40, valine 42, glycine 67, glutamate 88, aspartate 118, and asparagine 137 each coordinate S-adenosyl-L-methionine. Residues 295-305 (SADRGGTDREG) show a composition bias toward basic and acidic residues. The interval 295–318 (SADRGGTDREGTSPPTAGQGAPAR) is disordered.

Belongs to the class I-like SAM-binding methyltransferase superfamily. rRNA adenine N(6)-methyltransferase family. RsmA subfamily.

It is found in the cytoplasm. The catalysed reaction is adenosine(1518)/adenosine(1519) in 16S rRNA + 4 S-adenosyl-L-methionine = N(6)-dimethyladenosine(1518)/N(6)-dimethyladenosine(1519) in 16S rRNA + 4 S-adenosyl-L-homocysteine + 4 H(+). In terms of biological role, specifically dimethylates two adjacent adenosines (A1518 and A1519) in the loop of a conserved hairpin near the 3'-end of 16S rRNA in the 30S particle. May play a critical role in biogenesis of 30S subunits. In Mycolicibacterium paratuberculosis (strain ATCC BAA-968 / K-10) (Mycobacterium paratuberculosis), this protein is Ribosomal RNA small subunit methyltransferase A.